The following is a 269-amino-acid chain: Phosphonates import ATP-binding protein PhnC 2 (269 aa).

One can recognise an ABC transporter domain in the interval 2–246 (LRIDSLSKRY…VLNEIYGEED (245 aa)). 35–42 (GPSGAGKS) is a binding site for ATP. The disordered stretch occupies residues 246 to 269 (DWNASGPAQDSEENEAVSAGVATH).

This sequence belongs to the ABC transporter superfamily. Phosphonates importer (TC 3.A.1.9.1) family. As to quaternary structure, the complex is composed of two ATP-binding proteins (PhnC), two transmembrane proteins (PhnE) and a solute-binding protein (PhnD).

Its subcellular location is the cell inner membrane. The catalysed reaction is phosphonate(out) + ATP + H2O = phosphonate(in) + ADP + phosphate + H(+). Functionally, part of the ABC transporter complex PhnCDE involved in phosphonates import. Responsible for energy coupling to the transport system. The sequence is that of Phosphonates import ATP-binding protein PhnC 2 from Synechococcus sp. (strain JA-2-3B'a(2-13)) (Cyanobacteria bacterium Yellowstone B-Prime).